The chain runs to 337 residues: D-alanine--D-alanine ligase (337 aa).

One can recognise an ATP-grasp domain in the interval 124-330 (KMWFSALGIP…FTEYLSLVIN (207 aa)). Position 154–209 (154–209 (ALANWGSIFIKAASQGSSVGCYKVDDSSKVAQVLKDAFGYAPYVVVEKTIKARELE)) interacts with ATP. Mg(2+) is bound by residues D284, E297, and N299.

This sequence belongs to the D-alanine--D-alanine ligase family. Mg(2+) serves as cofactor. It depends on Mn(2+) as a cofactor.

Its subcellular location is the cytoplasm. It carries out the reaction 2 D-alanine + ATP = D-alanyl-D-alanine + ADP + phosphate + H(+). It functions in the pathway cell wall biogenesis; peptidoglycan biosynthesis. Cell wall formation. The polypeptide is D-alanine--D-alanine ligase (Shewanella putrefaciens (strain CN-32 / ATCC BAA-453)).